The following is a 279-amino-acid chain: Thioredoxin-like 1-1, chloroplastic (279 aa).

One can recognise a Thioredoxin domain in the interval 56–202 (ALTERKARPL…FKDALAKHGP (147 aa)). Active-site nucleophile residues include Cys125 and Cys128. The cysteines at positions 125 and 128 are disulfide-linked.

Belongs to the thioredoxin family.

Functionally, probable thiol-disulfide oxidoreductase that may participate in various redox reactions. The polypeptide is Thioredoxin-like 1-1, chloroplastic (Oryza sativa subsp. japonica (Rice)).